A 159-amino-acid chain; its full sequence is Ethylene-responsive transcription factor ERF069 (159 aa).

Disordered regions lie at residues 1–36 (MKRI…KKLV) and 128–159 (DAPT…EEVV). Positions 74 to 134 (KFRGVRQRPW…IGPDAPTNFG (61 aa)) form a DNA-binding region, AP2/ERF. Residues 136–148 (PDVDSAVVKKQDS) are compositionally biased toward basic and acidic residues.

It belongs to the AP2/ERF transcription factor family. ERF subfamily.

The protein localises to the nucleus. Its function is as follows. Probably acts as a transcriptional activator. Binds to the GCC-box pathogenesis-related promoter element. May be involved in the regulation of gene expression by stress factors and by components of stress signal transduction pathways. This chain is Ethylene-responsive transcription factor ERF069 (ERF069), found in Arabidopsis thaliana (Mouse-ear cress).